The following is a 133-amino-acid chain: Small ribosomal subunit protein uS8 (133 aa).

This sequence belongs to the universal ribosomal protein uS8 family. In terms of assembly, part of the 30S ribosomal subunit. Contacts proteins S5 and S12.

Its function is as follows. One of the primary rRNA binding proteins, it binds directly to 16S rRNA central domain where it helps coordinate assembly of the platform of the 30S subunit. The protein is Small ribosomal subunit protein uS8 of Chlamydia pneumoniae (Chlamydophila pneumoniae).